The following is a 232-amino-acid chain: Ubiquinone biosynthesis O-methyltransferase (232 aa).

S-adenosyl-L-methionine-binding residues include Arg36, Gly55, Asp76, and Leu120.

Belongs to the methyltransferase superfamily. UbiG/COQ3 family.

The enzyme catalyses a 3-demethylubiquinol + S-adenosyl-L-methionine = a ubiquinol + S-adenosyl-L-homocysteine + H(+). It carries out the reaction a 3-(all-trans-polyprenyl)benzene-1,2-diol + S-adenosyl-L-methionine = a 2-methoxy-6-(all-trans-polyprenyl)phenol + S-adenosyl-L-homocysteine + H(+). Its pathway is cofactor biosynthesis; ubiquinone biosynthesis. Its function is as follows. O-methyltransferase that catalyzes the 2 O-methylation steps in the ubiquinone biosynthetic pathway. This Pseudomonas fluorescens (strain Pf0-1) protein is Ubiquinone biosynthesis O-methyltransferase.